Consider the following 168-residue polypeptide: SsrA-binding protein (168 aa).

Residues 1 to 20 (MAAQSKQAKPSGKQGGKKII) are disordered.

The protein belongs to the SmpB family.

It is found in the cytoplasm. Required for rescue of stalled ribosomes mediated by trans-translation. Binds to transfer-messenger RNA (tmRNA), required for stable association of tmRNA with ribosomes. tmRNA and SmpB together mimic tRNA shape, replacing the anticodon stem-loop with SmpB. tmRNA is encoded by the ssrA gene; the 2 termini fold to resemble tRNA(Ala) and it encodes a 'tag peptide', a short internal open reading frame. During trans-translation Ala-aminoacylated tmRNA acts like a tRNA, entering the A-site of stalled ribosomes, displacing the stalled mRNA. The ribosome then switches to translate the ORF on the tmRNA; the nascent peptide is terminated with the 'tag peptide' encoded by the tmRNA and targeted for degradation. The ribosome is freed to recommence translation, which seems to be the essential function of trans-translation. This is SsrA-binding protein from Mycobacterium ulcerans (strain Agy99).